The following is a 312-amino-acid chain: Protein-glutamate methylesterase/protein-glutamine glutaminase (312 aa).

Residues 5–122 (RVLSVDDSAL…REGMLAYSEM (118 aa)) enclose the Response regulatory domain. At aspartate 56 the chain carries 4-aspartylphosphate. In terms of domain architecture, CheB-type methylesterase spans 152–307 (LLSSEKLIAI…QQMLAKISAG (156 aa)). Active-site residues include serine 164, histidine 190, and aspartate 249.

Belongs to the CheB family. Post-translationally, phosphorylated by CheA. Phosphorylation of the N-terminal regulatory domain activates the methylesterase activity.

Its subcellular location is the cytoplasm. It catalyses the reaction [protein]-L-glutamate 5-O-methyl ester + H2O = L-glutamyl-[protein] + methanol + H(+). The catalysed reaction is L-glutaminyl-[protein] + H2O = L-glutamyl-[protein] + NH4(+). Functionally, involved in chemotaxis. Part of a chemotaxis signal transduction system that modulates chemotaxis in response to various stimuli. Catalyzes the demethylation of specific methylglutamate residues introduced into the chemoreceptors (methyl-accepting chemotaxis proteins or MCP) by CheR. Also mediates the irreversible deamidation of specific glutamine residues to glutamic acid. This is Protein-glutamate methylesterase/protein-glutamine glutaminase from Shigella boydii serotype 4 (strain Sb227).